Consider the following 98-residue polypeptide: Small ribosomal subunit protein uS19 (98 aa).

Positions 77 to 98 are disordered; that stretch reads TRTFRGHAGGKAEKGGSAPRKK.

Belongs to the universal ribosomal protein uS19 family.

In terms of biological role, protein S19 forms a complex with S13 that binds strongly to the 16S ribosomal RNA. This Chlorobium limicola (strain DSM 245 / NBRC 103803 / 6330) protein is Small ribosomal subunit protein uS19.